Consider the following 90-residue polypeptide: Phaiodotoxin (90 aa).

The first 18 residues, 1–18 (MKTIPLLFLLFIYFECDG), serve as a signal peptide directing secretion. The region spanning 19–90 (KFIRHKDESF…CFGALESKCA (72 aa)) is the LCN-type CS-alpha/beta domain. Disulfide bonds link Cys-31–Cys-56, Cys-41–Cys-68, Cys-45–Cys-70, and Cys-81–Cys-89.

As to expression, expressed by the venom gland.

The protein resides in the secreted. In terms of biological role, sodium channel (Nav) specific neurotoxin. Causes impairment of movement and mild paralysis in crickets at a dose of 0.5 ug per animal. A dose of 0.8 ug per cricket causes clear flaccid paralysis. A dose of 1.0 ug per cricket causes death within 2 hours. Is not toxic to mice at a dose of 100 ug per 20 g mouse weight. This is Phaiodotoxin from Anuroctonus phaiodactylus (Mafia scorpion).